A 376-amino-acid polypeptide reads, in one-letter code: Anhydro-N-acetylmuramic acid kinase (376 aa).

Position 16-23 (16-23 (GTSMDGVD)) interacts with ATP.

It belongs to the anhydro-N-acetylmuramic acid kinase family.

It carries out the reaction 1,6-anhydro-N-acetyl-beta-muramate + ATP + H2O = N-acetyl-D-muramate 6-phosphate + ADP + H(+). The protein operates within amino-sugar metabolism; 1,6-anhydro-N-acetylmuramate degradation. Its pathway is cell wall biogenesis; peptidoglycan recycling. In terms of biological role, catalyzes the specific phosphorylation of 1,6-anhydro-N-acetylmuramic acid (anhMurNAc) with the simultaneous cleavage of the 1,6-anhydro ring, generating MurNAc-6-P. Is required for the utilization of anhMurNAc either imported from the medium or derived from its own cell wall murein, and thus plays a role in cell wall recycling. The chain is Anhydro-N-acetylmuramic acid kinase from Paraburkholderia xenovorans (strain LB400).